Consider the following 162-residue polypeptide: MGLETEKADVQLFMADDAYSHHSGVDYADPEKYVDSSHDRDPHQLNSHLKLGFEDLIAEPETTHSFDKVWICSHALFEISKYVMYKFLTVFLAIPLAFIAGILFATLSCLHIWILMPFVKTCLMVLPSVQTIWKSVTDVVIGPLCTSVGRSFSSVSMQLSHD.

Over 1–86 (MGLETEKADV…FEISKYVMYK (86 aa)) the chain is Cytoplasmic. Tyr-19 carries the post-translational modification Phosphotyrosine; by SRC. Phosphoserine is present on residues Ser-20 and Ser-23. Tyr-27 bears the Phosphotyrosine mark. Residue Ser-36 is modified to Phosphoserine. The helical intramembrane region spans 87-107 (FLTVFLAIPLAFIAGILFATL). Over 108 to 162 (SCLHIWILMPFVKTCLMVLPSVQTIWKSVTDVVIGPLCTSVGRSFSSVSMQLSHD) the chain is Cytoplasmic.

Belongs to the caveolin family. Monomer or homodimer. Interacts with CAV1; the interaction forms a stable heterooligomeric complex that is required for targeting to lipid rafts and for caveolae formation. Tyrosine phosphorylated forms do not form heterooligomers with the Tyr-19-phosphorylated form existing as a monomer or dimer, and the Tyr-27-form as a monomer only. Interacts (tyrosine phosphorylated form) with the SH2 domain-containing proteins, RASA1, NCK1 and SRC. Interacts (tyrosine phosphorylated form) with INSR, the interaction (Tyr-27-phosphorylated form) is increased on insulin stimulation. Interacts (Tyr-19 phosphorylated form) with MAPK1 (phosphorylated form); the interaction, promoted by insulin, leads to nuclear location and MAPK1 activation. Interacts with STAT3; the interaction is increased on insulin-induced tyrosine phosphorylation leading to STAT activation. Phosphorylated on serine and tyrosine residues. CAV1 promotes phosphorylation on Ser-23 which then targets the complex to the plasma membrane, lipid rafts and caveolae. Phosphorylation on Ser-36 appears to modulate mitosis in endothelial cells. Phosphorylation on both Tyr-19 and Tyr-27 is required for insulin-induced 'Ser-727' phosphorylation of STAT3 and its activation. Phosphorylation on Tyr-19 is required for insulin-induced phosphorylation of MAPK1 and DNA binding of STAT3. Tyrosine phosphorylation is induced by both EGF and insulin.

The protein resides in the nucleus. It is found in the cytoplasm. It localises to the golgi apparatus membrane. Its subcellular location is the cell membrane. The protein localises to the membrane. The protein resides in the caveola. Its function is as follows. May act as a scaffolding protein within caveolar membranes. Interacts directly with G-protein alpha subunits and can functionally regulate their activity. Acts as an accessory protein in conjunction with CAV1 in targeting to lipid rafts and driving caveolae formation. The Ser-36 phosphorylated form has a role in modulating mitosis in endothelial cells. Positive regulator of cellular mitogenesis of the MAPK signaling pathway. Required for the insulin-stimulated nuclear translocation and activation of MAPK1 and STAT3, and the subsequent regulation of cell cycle progression. In Mus musculus (Mouse), this protein is Caveolin-2 (Cav2).